The primary structure comprises 238 residues: Demethylmenaquinone methyltransferase (238 aa).

S-adenosyl-L-methionine is bound by residues T65, D85, and 109-110; that span reads DA.

It belongs to the class I-like SAM-binding methyltransferase superfamily. MenG/UbiE family.

The catalysed reaction is a 2-demethylmenaquinol + S-adenosyl-L-methionine = a menaquinol + S-adenosyl-L-homocysteine + H(+). It participates in quinol/quinone metabolism; menaquinone biosynthesis; menaquinol from 1,4-dihydroxy-2-naphthoate: step 2/2. Its function is as follows. Methyltransferase required for the conversion of demethylmenaquinol (DMKH2) to menaquinol (MKH2). The chain is Demethylmenaquinone methyltransferase from Roseiflexus castenholzii (strain DSM 13941 / HLO8).